The following is a 261-amino-acid chain: Thiamine thiazole synthase (261 aa).

Residues Ala33, 52-53, Gly60, Val124, and 152-154 contribute to the NAD(+) site; these read ER and HVD. 2 residues coordinate Fe cation: Asp154 and His169. Ile219 contributes to the NAD(+) binding site. Arg229 lines the glycine pocket.

It belongs to the THI4 family. In terms of assembly, homooctamer; tetramer of dimers. It depends on Fe(2+) as a cofactor.

It catalyses the reaction hydrogen sulfide + glycine + NAD(+) = ADP-5-ethyl-4-methylthiazole-2-carboxylate + nicotinamide + 3 H2O + H(+). It functions in the pathway cofactor biosynthesis; thiamine diphosphate biosynthesis. Functionally, involved in the biosynthesis of the thiazole moiety of thiamine. Catalyzes the conversion of NAD and glycine to adenosine diphosphate 5-(2-hydroxyethyl)-4-methylthiazole-2-carboxylate (ADT), an adenylated thiazole intermediate, using free sulfide as a source of sulfur. In Pyrobaculum calidifontis (strain DSM 21063 / JCM 11548 / VA1), this protein is Thiamine thiazole synthase.